The chain runs to 323 residues: Zinc finger C2HC domain-containing protein 1A (323 aa).

The segment at 14 to 43 (ELLPCKICGRTFFPVALKKHGPICQKTATK) adopts a C2HC/C3H-type 1 zinc-finger fold. Zn(2+) contacts are provided by C18, C21, H33, and C37. The disordered stretch occupies residues 42-81 (TKKRKTFDSSRQRAEGTDIPTVKPLKPRPEPPKKPSNWRR). The span at 47 to 57 (TFDSSRQRAEG) shows a compositional bias: basic and acidic residues. The C2HC/C3H-type 2 zinc finger occupies 117–146 (DYIQCPYCQRRFNENAADRHINFCKEQAAR). C121, C124, H136, and C140 together coordinate Zn(2+). The interval 149-258 (NKGKFSTDTK…NPASGVLTSK (110 aa)) is disordered. The span at 177–197 (SPGTTSSGSSRLPQPSGTSKT) shows a compositional bias: polar residues. Residues 198-214 (VVGAPSGKVSSVSSSSG) show a composition bias toward low complexity. S221 carries the phosphoserine modification. T242 bears the Phosphothreonine mark. Phosphoserine is present on S290.

It belongs to the ZC2HC1 family. Zn(2+) serves as cofactor.

The polypeptide is Zinc finger C2HC domain-containing protein 1A (ZC2HC1A) (Bos taurus (Bovine)).